The following is a 323-amino-acid chain: uncharacterized protein (323 aa).

The active-site Proton donor is Y59. 198–208 (SPLAQGLLGGK) contributes to the NADP(+) binding site.

It belongs to the aldo/keto reductase family. Aldo/keto reductase 2 subfamily.

This is an uncharacterized protein from Mycobacterium tuberculosis (strain CDC 1551 / Oshkosh).